Reading from the N-terminus, the 464-residue chain is ATP synthase subunit beta (464 aa).

Residue 153 to 160 participates in ATP binding; the sequence is GGAGVGKT.

It belongs to the ATPase alpha/beta chains family. As to quaternary structure, F-type ATPases have 2 components, CF(1) - the catalytic core - and CF(0) - the membrane proton channel. CF(1) has five subunits: alpha(3), beta(3), gamma(1), delta(1), epsilon(1). CF(0) has three main subunits: a(1), b(2) and c(9-12). The alpha and beta chains form an alternating ring which encloses part of the gamma chain. CF(1) is attached to CF(0) by a central stalk formed by the gamma and epsilon chains, while a peripheral stalk is formed by the delta and b chains.

It is found in the cell membrane. It catalyses the reaction ATP + H2O + 4 H(+)(in) = ADP + phosphate + 5 H(+)(out). In terms of biological role, produces ATP from ADP in the presence of a proton gradient across the membrane. The catalytic sites are hosted primarily by the beta subunits. This Alkaliphilus metalliredigens (strain QYMF) protein is ATP synthase subunit beta.